A 443-amino-acid chain; its full sequence is MPKSGRDGGASKDSKYDLSKISARVDRVNVSGLLRTHNDYVMRAADGLFKASNFQDLMLEAMSTKSYLHELGIFKDVSVHIDVSRGADASPQGYEVTFKGNEMSRMMGSAGTEIGQNEGSLRTELTIPNILGRGENISLQGSYSSTRANDLQLKFWKPFFHTRFKENRPEMSFSIFRQTDRFDISSFQTTNIGYLVDFSAHTMVGVDLTHSLQYENAIRDVGLLNKSVPFAIRDHCGPKLASLLRYSVVYDNRDGNVFPTRGIYLKSVNEYCGLGGNVAYTSSTAHGELNVPLFAGLVAQFCARVGVVKETKNTTQLPISSLFYCGGPLTLRGFKFGGAGPVVESTPIGAQSFWCTGAHLWAPLPFAGVFKNLASHFRMHFFYNIGNNNSFSTENMRSAFGMGLAVKLAERARIELNYCVPVRHQDTDRILNGFQFGIGYEFV.

In terms of domain architecture, POTRA spans 23-101; the sequence is ARVDRVNVSG…QGYEVTFKGN (79 aa).

It belongs to the SAM50/omp85 family. As to quaternary structure, associates with the mitochondrial contact site and cristae organizing system (MICOS) complex (also known as MINOS or MitOS complex).

It is found in the mitochondrion outer membrane. In terms of biological role, may play a role in the maintenance of the structure of mitochondrial cristae. The protein is SAM50-like protein CG7639 of Drosophila melanogaster (Fruit fly).